The chain runs to 97 residues: Glutamyl-tRNA(Gln) amidotransferase subunit C 2 (97 aa).

It belongs to the GatC family. As to quaternary structure, heterotrimer of A, B and C subunits.

The enzyme catalyses L-glutamyl-tRNA(Gln) + L-glutamine + ATP + H2O = L-glutaminyl-tRNA(Gln) + L-glutamate + ADP + phosphate + H(+). The catalysed reaction is L-aspartyl-tRNA(Asn) + L-glutamine + ATP + H2O = L-asparaginyl-tRNA(Asn) + L-glutamate + ADP + phosphate + 2 H(+). Functionally, allows the formation of correctly charged Asn-tRNA(Asn) or Gln-tRNA(Gln) through the transamidation of misacylated Asp-tRNA(Asn) or Glu-tRNA(Gln) in organisms which lack either or both of asparaginyl-tRNA or glutaminyl-tRNA synthetases. The reaction takes place in the presence of glutamine and ATP through an activated phospho-Asp-tRNA(Asn) or phospho-Glu-tRNA(Gln). The chain is Glutamyl-tRNA(Gln) amidotransferase subunit C 2 (gatC2) from Clostridium acetobutylicum (strain ATCC 824 / DSM 792 / JCM 1419 / IAM 19013 / LMG 5710 / NBRC 13948 / NRRL B-527 / VKM B-1787 / 2291 / W).